The sequence spans 872 residues: FHIP family protein CBG19667 (872 aa).

The interval 800 to 841 (SRSSPRSADEHDSTLFYGRSTIPPPGRKPLLREPSHQETLDD) is disordered. The span at 829–841 (LLREPSHQETLDD) shows a compositional bias: basic and acidic residues.

This sequence belongs to the FHIP family.

The polypeptide is FHIP family protein CBG19667 (Caenorhabditis briggsae).